The chain runs to 808 residues: Type VI secretion system spike protein VgrG4b (808 aa).

It belongs to the VgrG protein family.

The protein localises to the secreted. Part of the H2 type VI secretion system (H2-T6SS) specialized secretion system, which delivers several virulence factors in both prokaryotic and eukaryotic cells during infection. Allows the delivery of the phospholipase effector PldA to target cells where it exerts its toxicity. The protein is Type VI secretion system spike protein VgrG4b of Pseudomonas aeruginosa (strain ATCC 15692 / DSM 22644 / CIP 104116 / JCM 14847 / LMG 12228 / 1C / PRS 101 / PAO1).